The chain runs to 404 residues: Biflaviolin synthase CYP158A2 (404 aa).

Residues arginine 288 and leucine 293 each contribute to the flaviolin site. Cysteine 353 serves as a coordination point for heme.

The protein belongs to the cytochrome P450 family. Heme is required as a cofactor.

It carries out the reaction 2 flaviolin + 2 reduced [2Fe-2S]-[ferredoxin] + O2 + H(+) = 3,3'-biflaviolin + 2 oxidized [2Fe-2S]-[ferredoxin] + 2 H2O. The catalysed reaction is 2 flaviolin + 2 reduced [2Fe-2S]-[ferredoxin] + O2 + H(+) = 3,8'-biflaviolin + 2 oxidized [2Fe-2S]-[ferredoxin] + 2 H2O. It participates in pigment biosynthesis. Functionally, catalyzes oxidative C-C coupling reaction to polymerize flaviolin and form highly conjugated pigments which protect the soil bacterium from deleterious effects of UV irradiation (three isomers of biflaviolin and one triflaviolin). This Streptomyces coelicolor (strain ATCC BAA-471 / A3(2) / M145) protein is Biflaviolin synthase CYP158A2.